The primary structure comprises 90 residues: Auxin-responsive protein SAUR19 (90 aa).

The protein belongs to the ARG7 family. Interacts with and inhibits PP2C-D subfamily of type 2C phosphatases such as PP2C67/PP2C-D1, PP2C64/PP2C-D5 and PP2C46/PP2C-D6.

It is found in the cell membrane. In terms of biological role, provide a mechanistic link between auxin and plasma membrane H(+)-ATPases (PM H(+)-ATPases, e.g. AHA1 and AHA2), and triggers PM H(+)-ATPases activity by promoting phosphorylation of their C-terminal autoinhibitory domain as a result of PP2C-D subfamily of type 2C phosphatases inhibition, thus leading to the acidification of the apoplast and the facilitation of solutes and water uptake to drive cell expansion. Prevents the apical hook maintenance of etiolated seedlings. Functions as positive effectors of cell expansion through modulation of auxin transport. In Arabidopsis thaliana (Mouse-ear cress), this protein is Auxin-responsive protein SAUR19.